A 232-amino-acid polypeptide reads, in one-letter code: Large ribosomal subunit protein uL1 (232 aa).

The protein belongs to the universal ribosomal protein uL1 family. In terms of assembly, part of the 50S ribosomal subunit.

In terms of biological role, binds directly to 23S rRNA. The L1 stalk is quite mobile in the ribosome, and is involved in E site tRNA release. Protein L1 is also a translational repressor protein, it controls the translation of the L11 operon by binding to its mRNA. The sequence is that of Large ribosomal subunit protein uL1 from Chlamydia trachomatis serovar L2 (strain ATCC VR-902B / DSM 19102 / 434/Bu).